The following is a 393-amino-acid chain: Ceramide synthase 4 (393 aa).

At 1-31 (MWSSLNDWLWNERLWLPANISWAQLEDHDGL) the chain is on the lumenal side. N-linked (GlcNAc...) asparagine glycosylation occurs at asparagine 19. A helical membrane pass occupies residues 32–52 (VFPHPQDTLMAVPLALALVVV). Positions 67 to 128 (WLGVRNQIRR…RRRRNQDRPC (62 aa)) are homeobox-like. Residues 131-332 (KKFCESSWKF…ILCMIYSFIK (202 aa)) enclose the TLC domain. Helical transmembrane passes span 140–160 (FVFY…ESWL), 179–199 (LYHW…TLPF), 209–229 (QVIH…LNLL), and 260–280 (MCDT…LVLF). Residues 291-301 (ESIGNFSPFFG) carry the Last loop motif motif. The chain crosses the membrane as a helical span at residues 304–324 (FLNILLVILQLLHVFWSWLIL). Residues 325-393 (CMIYSFIKKG…RMVNRHTPAT (69 aa)) lie on the Cytoplasmic side of the membrane. A phosphoserine mark is found at serine 342, serine 349, and serine 350. Over residues 346–356 (ELDSSDGEAAE) the composition is skewed to acidic residues. The interval 346–393 (ELDSSDGEAAEECPQMKNGAAQRPGAAPTDGPRSRAAGRMVNRHTPAT) is disordered.

Phosphorylated at the C-terminus by CK2.

Its subcellular location is the endoplasmic reticulum membrane. It catalyses the reaction sphinganine + octadecanoyl-CoA = N-(octadecanoyl)-sphinganine + CoA + H(+). The catalysed reaction is eicosanoyl-CoA + sphinganine = N-eicosanoylsphinganine + CoA + H(+). It carries out the reaction docosanoyl-CoA + sphinganine = N-docosanoylsphinganine + CoA + H(+). The enzyme catalyses tetracosanoyl-CoA + sphinganine = N-tetracosanoylsphinganine + CoA + H(+). It catalyses the reaction hexacosanoyl-CoA + sphinganine = N-hexacosanoylsphinganine + CoA + H(+). The catalysed reaction is a fatty acyl-CoA + sphing-4-enine = an N-acylsphing-4-enine + CoA + H(+). It carries out the reaction sphing-4-enine + octadecanoyl-CoA = N-octadecanoylsphing-4-enine + CoA + H(+). The enzyme catalyses hexadecasphinganine + octadecanoyl-CoA = N-octadecanoylhexadecasphinganine + CoA + H(+). It participates in lipid metabolism; sphingolipid metabolism. Its function is as follows. Ceramide synthase that catalyzes formation of ceramide from sphinganine and acyl-CoA substrates, with high selectivity toward long and very-long chains (C18:0-C22:0) as acyl donor. The chain is Ceramide synthase 4 from Bos taurus (Bovine).